A 601-amino-acid polypeptide reads, in one-letter code: Oligoendopeptidase F homolog (601 aa).

Residue histidine 387 participates in Zn(2+) binding. Glutamate 388 is an active-site residue. The Zn(2+) site is built by histidine 391 and histidine 394.

It belongs to the peptidase M3 family. Zn(2+) is required as a cofactor.

Functionally, hydrolyzes peptides containing between 7 and 17 amino acids with a rather wide specificity. The sequence is that of Oligoendopeptidase F homolog (pepF) from Lactococcus lactis subsp. lactis (strain IL1403) (Streptococcus lactis).